Here is a 151-residue protein sequence, read N- to C-terminus: D-aminoacyl-tRNA deacylase (151 aa).

Positions 137-138 match the Gly-cisPro motif, important for rejection of L-amino acids motif; that stretch reads GP.

This sequence belongs to the DTD family. As to quaternary structure, homodimer.

The protein localises to the cytoplasm. The catalysed reaction is glycyl-tRNA(Ala) + H2O = tRNA(Ala) + glycine + H(+). The enzyme catalyses a D-aminoacyl-tRNA + H2O = a tRNA + a D-alpha-amino acid + H(+). Its function is as follows. An aminoacyl-tRNA editing enzyme that deacylates mischarged D-aminoacyl-tRNAs. Also deacylates mischarged glycyl-tRNA(Ala), protecting cells against glycine mischarging by AlaRS. Acts via tRNA-based rather than protein-based catalysis; rejects L-amino acids rather than detecting D-amino acids in the active site. By recycling D-aminoacyl-tRNA to D-amino acids and free tRNA molecules, this enzyme counteracts the toxicity associated with the formation of D-aminoacyl-tRNA entities in vivo and helps enforce protein L-homochirality. This Listeria monocytogenes serotype 4a (strain HCC23) protein is D-aminoacyl-tRNA deacylase.